The sequence spans 357 residues: MTKLALFYRHLAVKGPCSPLEWLIFAFLLPLGWLYGAVMRLRALFYRIGWFDAYCADVPVISVGNLSVGGTGKTPVVDYLIRYCRSLDKRVAVVSRGYAGGKGAALRVVCAGQGPILDVQQAGDEPWLLARRNPAAIVIVAPHRAQGVRHAVENLGAEVVLLDDGFQHLAVSRDFDLVLLDALRPFGNGQVLPAGLLREPVSALRRGDLFVLTRCPEDLAGTADVPGPVVHCRHILEESAVDLDGEVRSLRELAGLRGIAFAGIAEPEGFFRELQSHGLTLTRTLHFSDHAAYDERAAILLKDAAKSGDYFITTEKDAVKLAHMTLPLPCFQVPLRLMFVETGQLEQKLSPIISNQR.

Position 67–74 (67–74 (SVGGTGKT)) interacts with ATP.

This sequence belongs to the LpxK family.

It catalyses the reaction a lipid A disaccharide + ATP = a lipid IVA + ADP + H(+). The protein operates within glycolipid biosynthesis; lipid IV(A) biosynthesis; lipid IV(A) from (3R)-3-hydroxytetradecanoyl-[acyl-carrier-protein] and UDP-N-acetyl-alpha-D-glucosamine: step 6/6. Functionally, transfers the gamma-phosphate of ATP to the 4'-position of a tetraacyldisaccharide 1-phosphate intermediate (termed DS-1-P) to form tetraacyldisaccharide 1,4'-bis-phosphate (lipid IVA). The polypeptide is Tetraacyldisaccharide 4'-kinase (Syntrophotalea carbinolica (strain DSM 2380 / NBRC 103641 / GraBd1) (Pelobacter carbinolicus)).